A 146-amino-acid polypeptide reads, in one-letter code: Large ribosomal subunit protein uL15 (146 aa).

A compositionally biased stretch (basic and acidic residues) spans 1 to 18 (MKLHELKPSEGSRKERNR). The segment at 1–50 (MKLHELKPSEGSRKERNRVGRGTGSGNGKTSGRGHKGQKARSGGGVRLGF) is disordered. Over residues 21 to 31 (RGTGSGNGKTS) the composition is skewed to gly residues.

Belongs to the universal ribosomal protein uL15 family. As to quaternary structure, part of the 50S ribosomal subunit.

Its function is as follows. Binds to the 23S rRNA. In Listeria welshimeri serovar 6b (strain ATCC 35897 / DSM 20650 / CCUG 15529 / CIP 8149 / NCTC 11857 / SLCC 5334 / V8), this protein is Large ribosomal subunit protein uL15.